The chain runs to 135 residues: Small ribosomal subunit protein uS9 (135 aa).

Over residues 108–118 the composition is skewed to basic and acidic residues; it reads VGDPRRTEPHK. A disordered region spans residues 108–135; that stretch reads VGDPRRTEPHKPNRSTKGPRAKRQKSYR. Over residues 119–135 the composition is skewed to basic residues; sequence PNRSTKGPRAKRQKSYR.

Belongs to the universal ribosomal protein uS9 family.

The chain is Small ribosomal subunit protein uS9 (rps9) from Pyrococcus horikoshii (strain ATCC 700860 / DSM 12428 / JCM 9974 / NBRC 100139 / OT-3).